The following is a 223-amino-acid chain: MDSTTLVYADLNLARIQEPKHDSPPSLSPDTCRCPRWHRLALKFGCAGLILLVLVVIGLCVLVLSVQKSSVQKICADVQENRTHTTDCSVNLECPQDWLSHRDKCFRVFQVSNTWEEGQADCGRKGATLLLIQDQEELRFLLDSIKEKYNSFWIGLRFTLPDMNWKWINGTTFNSDVLKITGDTENGSCASISGDKVTSESCSTDNRWICQKELNHETPSNDS.

At 1 to 43 (MDSTTLVYADLNLARIQEPKHDSPPSLSPDTCRCPRWHRLALK) the chain is on the cytoplasmic side. The short motif at 6-11 (LVYADL) is the ITIM motif element. The LCK-binding motif motif lies at 32 to 35 (CRCP). A helical; Signal-anchor for type II membrane protein transmembrane segment spans residues 44–63 (FGCAGLILLVLVVIGLCVLV). The Extracellular segment spans residues 64 to 223 (LSVQKSSVQK…LNHETPSNDS (160 aa)). The 120-residue stretch at 93–212 (ECPQDWLSHR…STDNRWICQK (120 aa)) folds into the C-type lectin domain. Intrachain disulfides connect Cys122/Cys210 and Cys189/Cys202.

In terms of assembly, homodimer; disulfide-linked. Interacts with tyrosine kinase LCK. Binds PTPN6/SHP-1 in a phosphorylation-dependent manner. As to expression, expressed in NK cells and a subset of T-cells.

The protein resides in the membrane. Functionally, receptor for CLEC2D/OCIL. Ligand-binding contributes to inhibition of cytotoxic natural killer (NK) cells. May mediate MHC class I-independent 'missing-self' recognition of allografts, tumor cells and virus-infected cells. The sequence is that of Killer cell lectin-like receptor subfamily B member 1B allele A (Klrb1b) from Mus musculus (Mouse).